The sequence spans 1051 residues: Kinesin-like protein KIN-4B (1051 aa).

The tract at residues 1–21 is disordered; sequence MESHSSLSSSSSSSPPSSLSS. The region spanning 25-380 is the Kinesin motor domain; it reads CVKVAVNVRP…LKYANRARNI (356 aa). Residue 104–111 participates in ATP binding; it reads GQTGSGKT. Coiled coils occupy residues 414-448 and 540-644; these read ATSS…RSKR and RQHF…KMKQ. A compositionally biased stretch (low complexity) spans 916–925; sequence SSSYSGSSRS. Disordered regions lie at residues 916–946 and 1029–1051; these read SSSY…SSTY and MSKS…FQGA.

Belongs to the TRAFAC class myosin-kinesin ATPase superfamily. Kinesin family. KIN-4 subfamily. As to quaternary structure, homodimer.

Functionally, kinesin-like motor protein involved in the control of the oriented deposition of cellulose microfibrils. The polypeptide is Kinesin-like protein KIN-4B (Arabidopsis thaliana (Mouse-ear cress)).